Here is a 291-residue protein sequence, read N- to C-terminus: Phosphatidylglycerol--prolipoprotein diacylglyceryl transferase (291 aa).

A run of 4 helical transmembrane segments spans residues 24–44 (WYAL…RALL), 64–84 (FILW…VLFY), 99–119 (IWKG…AVIL), and 125–145 (GLPI…GLFL). Position 147 (Arg-147) interacts with a 1,2-diacyl-sn-glycero-3-phospho-(1'-sn-glycerol). 3 helical membrane-spanning segments follow: residues 187 to 207 (ATLE…AGAL), 211 to 231 (GLVL…GEFF), and 247 to 267 (MGML…CVAW).

The protein belongs to the Lgt family.

It is found in the cell inner membrane. The catalysed reaction is L-cysteinyl-[prolipoprotein] + a 1,2-diacyl-sn-glycero-3-phospho-(1'-sn-glycerol) = an S-1,2-diacyl-sn-glyceryl-L-cysteinyl-[prolipoprotein] + sn-glycerol 1-phosphate + H(+). The protein operates within protein modification; lipoprotein biosynthesis (diacylglyceryl transfer). Functionally, catalyzes the transfer of the diacylglyceryl group from phosphatidylglycerol to the sulfhydryl group of the N-terminal cysteine of a prolipoprotein, the first step in the formation of mature lipoproteins. The chain is Phosphatidylglycerol--prolipoprotein diacylglyceryl transferase from Nitrobacter hamburgensis (strain DSM 10229 / NCIMB 13809 / X14).